The chain runs to 347 residues: 3-isopropylmalate dehydrogenase (347 aa).

Residue 76–87 (GPKWTDPNNRPE) participates in NAD(+) binding. Substrate contacts are provided by R94, R104, R132, and D217. The Mg(2+) site is built by D217, D241, and D245. 275-287 (GSAPDIANEDKAN) serves as a coordination point for NAD(+).

This sequence belongs to the isocitrate and isopropylmalate dehydrogenases family. LeuB type 1 subfamily. As to quaternary structure, homodimer. Mg(2+) is required as a cofactor. It depends on Mn(2+) as a cofactor.

The protein resides in the cytoplasm. It carries out the reaction (2R,3S)-3-isopropylmalate + NAD(+) = 4-methyl-2-oxopentanoate + CO2 + NADH. The protein operates within amino-acid biosynthesis; L-leucine biosynthesis; L-leucine from 3-methyl-2-oxobutanoate: step 3/4. Functionally, catalyzes the oxidation of 3-carboxy-2-hydroxy-4-methylpentanoate (3-isopropylmalate) to 3-carboxy-4-methyl-2-oxopentanoate. The product decarboxylates to 4-methyl-2 oxopentanoate. This is 3-isopropylmalate dehydrogenase from Staphylococcus epidermidis (strain ATCC 12228 / FDA PCI 1200).